A 205-amino-acid chain; its full sequence is MQAPPSFYEGDTLEVAKKLLGQKLVHIVDGIKRSGIIVEVEAYKGPGDKAAHSYGGRRTDRTEVMFGAPGHAYVYLIYGMYHCFNVITAPVGTPQGVLIRAIEPVDGIEEIKLARYNKTDITKAQYKNLTNGPGKLCRALGITLEERGVSLQSDTLHIELVPEEEHISSQYKITAGPRINIDYAEEAVHYPWRFYYEGHPFVSKK.

The protein belongs to the DNA glycosylase MPG family.

This is Putative 3-methyladenine DNA glycosylase from Bacillus thuringiensis (strain Al Hakam).